A 341-amino-acid polypeptide reads, in one-letter code: DNA-directed RNA polymerase subunit alpha (341 aa).

The alpha N-terminal domain (alpha-NTD) stretch occupies residues 1-233; it reads MIQDEVPVSA…DLFLPFLHTE (233 aa). Residues 262-341 are alpha C-terminal domain (alpha-CTD); it reads DRMAKEVAFK…NLPRNKFSID (80 aa).

The protein belongs to the RNA polymerase alpha chain family. As to quaternary structure, in plastids the minimal PEP RNA polymerase catalytic core is composed of four subunits: alpha, beta, beta', and beta''. When a (nuclear-encoded) sigma factor is associated with the core the holoenzyme is formed, which can initiate transcription.

It is found in the plastid. Its subcellular location is the chloroplast. It carries out the reaction RNA(n) + a ribonucleoside 5'-triphosphate = RNA(n+1) + diphosphate. In terms of biological role, DNA-dependent RNA polymerase catalyzes the transcription of DNA into RNA using the four ribonucleoside triphosphates as substrates. This is DNA-directed RNA polymerase subunit alpha from Angiopteris evecta (Mule's foot fern).